The following is a 75-amino-acid chain: Small ribosomal subunit protein bS18 (75 aa).

Belongs to the bacterial ribosomal protein bS18 family. In terms of assembly, part of the 30S ribosomal subunit. Forms a tight heterodimer with protein bS6.

Its function is as follows. Binds as a heterodimer with protein bS6 to the central domain of the 16S rRNA, where it helps stabilize the platform of the 30S subunit. The sequence is that of Small ribosomal subunit protein bS18 from Shewanella frigidimarina (strain NCIMB 400).